We begin with the raw amino-acid sequence, 310 residues long: Elongation factor Ts (310 aa).

The tract at residues 80 to 83 (TDFV) is involved in Mg(2+) ion dislocation from EF-Tu.

It belongs to the EF-Ts family.

The protein resides in the cytoplasm. Its function is as follows. Associates with the EF-Tu.GDP complex and induces the exchange of GDP to GTP. It remains bound to the aminoacyl-tRNA.EF-Tu.GTP complex up to the GTP hydrolysis stage on the ribosome. In Methylocella silvestris (strain DSM 15510 / CIP 108128 / LMG 27833 / NCIMB 13906 / BL2), this protein is Elongation factor Ts.